A 294-amino-acid chain; its full sequence is NAD kinase (294 aa).

D74 (proton acceptor) is an active-site residue. Residues 74–75, 148–149, H159, R176, D178, 189–194, and Q249 contribute to the NAD(+) site; these read DG, NE, and TAYSLS.

It belongs to the NAD kinase family. It depends on a divalent metal cation as a cofactor.

The protein resides in the cytoplasm. It catalyses the reaction NAD(+) + ATP = ADP + NADP(+) + H(+). Its function is as follows. Involved in the regulation of the intracellular balance of NAD and NADP, and is a key enzyme in the biosynthesis of NADP. Catalyzes specifically the phosphorylation on 2'-hydroxyl of the adenosine moiety of NAD to yield NADP. The polypeptide is NAD kinase (Vibrio atlanticus (strain LGP32) (Vibrio splendidus (strain Mel32))).